The following is a 328-amino-acid chain: Porphobilinogen deaminase (328 aa).

At cysteine 245 the chain carries S-(dipyrrolylmethanemethyl)cysteine.

The protein belongs to the HMBS family. In terms of assembly, monomer. It depends on dipyrromethane as a cofactor.

The enzyme catalyses 4 porphobilinogen + H2O = hydroxymethylbilane + 4 NH4(+). The protein operates within porphyrin-containing compound metabolism; protoporphyrin-IX biosynthesis; coproporphyrinogen-III from 5-aminolevulinate: step 2/4. Its pathway is porphyrin-containing compound metabolism; chlorophyll biosynthesis. Functionally, tetrapolymerization of the monopyrrole PBG into the hydroxymethylbilane pre-uroporphyrinogen in several discrete steps. This chain is Porphobilinogen deaminase, found in Gloeobacter violaceus (strain ATCC 29082 / PCC 7421).